Here is a 143-residue protein sequence, read N- to C-terminus: Large ribosomal subunit protein uL11 (143 aa).

This sequence belongs to the universal ribosomal protein uL11 family. Part of the ribosomal stalk of the 50S ribosomal subunit. Interacts with L10 and the large rRNA to form the base of the stalk. L10 forms an elongated spine to which L12 dimers bind in a sequential fashion forming a multimeric L10(L12)X complex. Post-translationally, one or more lysine residues are methylated.

Forms part of the ribosomal stalk which helps the ribosome interact with GTP-bound translation factors. The chain is Large ribosomal subunit protein uL11 from Allorhizobium ampelinum (strain ATCC BAA-846 / DSM 112012 / S4) (Agrobacterium vitis (strain S4)).